The primary structure comprises 382 residues: UDP-N-acetylenolpyruvoylglucosamine reductase (382 aa).

One can recognise an FAD-binding PCMH-type domain in the interval 50–253 (RVGGPAVLAE…REAVLRLRAS (204 aa)). Arginine 193 is an active-site residue. The active-site Proton donor is serine 270. The active site involves glutamate 374.

It belongs to the MurB family. The cofactor is FAD.

The protein localises to the cytoplasm. The enzyme catalyses UDP-N-acetyl-alpha-D-muramate + NADP(+) = UDP-N-acetyl-3-O-(1-carboxyvinyl)-alpha-D-glucosamine + NADPH + H(+). The protein operates within cell wall biogenesis; peptidoglycan biosynthesis. Cell wall formation. This chain is UDP-N-acetylenolpyruvoylglucosamine reductase, found in Nocardia farcinica (strain IFM 10152).